Reading from the N-terminus, the 336-residue chain is Glycerol-3-phosphate dehydrogenase [NAD(P)+] (336 aa).

NADPH contacts are provided by S14, W15, R35, R36, and K109. Residues K109 and G139 each contribute to the sn-glycerol 3-phosphate site. Residue A143 participates in NADPH binding. Residues K194, D247, S257, R258, and N259 each coordinate sn-glycerol 3-phosphate. The Proton acceptor role is filled by K194. R258 lines the NADPH pocket. E284 is an NADPH binding site.

The protein belongs to the NAD-dependent glycerol-3-phosphate dehydrogenase family.

The protein resides in the cytoplasm. It carries out the reaction sn-glycerol 3-phosphate + NAD(+) = dihydroxyacetone phosphate + NADH + H(+). The enzyme catalyses sn-glycerol 3-phosphate + NADP(+) = dihydroxyacetone phosphate + NADPH + H(+). The protein operates within membrane lipid metabolism; glycerophospholipid metabolism. Functionally, catalyzes the reduction of the glycolytic intermediate dihydroxyacetone phosphate (DHAP) to sn-glycerol 3-phosphate (G3P), the key precursor for phospholipid synthesis. This is Glycerol-3-phosphate dehydrogenase [NAD(P)+] from Streptomyces griseus subsp. griseus (strain JCM 4626 / CBS 651.72 / NBRC 13350 / KCC S-0626 / ISP 5235).